The chain runs to 941 residues: Coiled-coil domain-containing protein 39 (941 aa).

Coiled coils occupy residues 16 to 122 (AIPV…ENGI), 164 to 273 (AQQD…ESEI), 306 to 605 (QLKG…EIKV), and 665 to 825 (IKAA…EEQD). The segment at 868-941 (PTASTKGSRQ…SNVKSKKSSK (74 aa)) is disordered. 2 stretches are compositionally biased toward low complexity: residues 871 to 903 (STKGSRQSSRSPSHTSLSARSSRSTSTSTSQSS) and 914 to 934 (SSSLVGSPSRPSSASSSSSNV). 2 positions are modified to phosphoserine: Ser-892 and Ser-900.

Belongs to the CCDC39 family. Mainly expressed in nasal brushings and, to a lesser extent, in lungs and testis.

The protein resides in the cytoplasm. It localises to the cytoskeleton. Its subcellular location is the cilium axoneme. Functionally, required for assembly of dynein regulatory complex (DRC) and inner dynein arm (IDA) complexes, which are responsible for ciliary beat regulation, thereby playing a central role in motility in cilia and flagella. Probably acts together with CCDC40 to form a molecular ruler that determines the 96 nanometer (nm) repeat length and arrangements of components in cilia and flagella. Not required for outer dynein arm complexes assembly. The protein is Coiled-coil domain-containing protein 39 of Homo sapiens (Human).